The chain runs to 723 residues: MSQTITQGRLRIDANFKRFVDGEVLPGVELDAAAFWHNVDEIVHDLAPENRQLLAERDRIQAALDEWHRSNPGPVKDKAAYKSFLRELGYLVPQPERVTVETTGIDSEITSQAGPQLVVPAMNARYALNAANARWGSLYDALYGSDIIPQEGAMVSGYDPQRGEQVIAWVRRFLDESLPLENGSYQDVVAFKVVDKQLRIQLKNGKETTLRTPAQFVGYRGDAAAPTCILLKNNGLHIELQIDANGRIGKDDPAHINDVIVEAAISTILDCEDSVAAVDAEDKILLYRNLLGLMQGTLQEKMEKNGRQIVRKLNDDRQYTAADGSEISLHGRSLLFIRNVGHLMTIPVIWDSEGNEIPEGILDGVMTGAIALYDLKVQKNSRTGSVYIVKPKMHGPQEVAFANKLFTRIETMLGMAPNTLKMGIMDEERRTSLNLRSCIAQARNRVAFINTGFLDRTGDEMHSVMEAGPMLRKNQMKSTPWIKAYERNNVLSGLFCGLRGKAQIGKGMWAMPDLMADMYSQKGDQLRAGANTAWVPSPTAATLHALHYHHTNVQSVQANIAQTEFSAEFEPLLDDLLTIPVAENANWSAQEIQQELDNNVQGILGYVVRWVEQGIGCSKVPDIHNVALMEDRATLRISSQHIANWLRHGILTKEQVQASLENMAKVVDQQNAGDPAYRPMAGNFANSCAFKAASDLIFLGVKQPNGYTEPLLHAWRLREKESH.

Residues valine 118, 125-126, serine 274, and arginine 311 each bind acetyl-CoA; that span reads RY. Arginine 338 serves as the catalytic Proton acceptor. Glyoxylate contacts are provided by residues arginine 338, glutamate 427, and 452-455; that span reads GFLD. Mg(2+)-binding residues include glutamate 427 and aspartate 455. Acetyl-CoA is bound at residue proline 536. The residue at position 617 (cysteine 617) is a Cysteine sulfenic acid (-SOH). Aspartate 631 acts as the Proton donor in catalysis. Cysteine 688 is subject to Cysteine sulfenic acid (-SOH).

This sequence belongs to the malate synthase family. GlcB subfamily. Monomer. It depends on Mg(2+) as a cofactor.

It localises to the cytoplasm. It catalyses the reaction glyoxylate + acetyl-CoA + H2O = (S)-malate + CoA + H(+). Its pathway is carbohydrate metabolism; glyoxylate cycle; (S)-malate from isocitrate: step 2/2. Involved in the glycolate utilization. Catalyzes the condensation and subsequent hydrolysis of acetyl-coenzyme A (acetyl-CoA) and glyoxylate to form malate and CoA. This Shigella flexneri protein is Malate synthase G.